A 284-amino-acid polypeptide reads, in one-letter code: MNPFLKLVRIHNVIGAGLGAFTGYVASSMWKIDPTELILAVLVVALVDAGGNAINDVYDVEIDRINKPDRPIPSGAVSLRTATSLSYGLMGVGVILSALQGYLQFLVALLTSVALIFYARDLKRTGIYGNLVVATATALSLFYGGLSYHEGDWLQRIWIPVLYTFLLTLSREIVKGIEDYRGDLANHVNTLATTRGIASAWRVARVALIITEVTSPLPLFLGYNILYGIVLVPFLYITTKAVLAETSEEGASKARSLLKGSAFLGMVAFALGSLPFQFLFHYLP.

7 helical membrane-spanning segments follow: residues 10 to 30, 37 to 57, 76 to 98, 102 to 119, 126 to 146, 217 to 237, and 260 to 280; these read IHNVIGAGLGAFTGYVASSMW, LILAVLVVALVDAGGNAINDV, AVSLRTATSLSYGLMGVGVILSA, YLQFLVALLTSVALIFYA, GIYGNLVVATATALSLFYGGL, LPLFLGYNILYGIVLVPFLYI, and GSAFLGMVAFALGSLPFQFLF.

It belongs to the UbiA prenyltransferase family. DGGGP synthase subfamily. Mg(2+) serves as cofactor.

The protein resides in the cell membrane. It carries out the reaction sn-3-O-(geranylgeranyl)glycerol 1-phosphate + (2E,6E,10E)-geranylgeranyl diphosphate = 2,3-bis-O-(geranylgeranyl)-sn-glycerol 1-phosphate + diphosphate. It participates in membrane lipid metabolism; glycerophospholipid metabolism. In terms of biological role, prenyltransferase that catalyzes the transfer of the geranylgeranyl moiety of geranylgeranyl diphosphate (GGPP) to the C2 hydroxyl of (S)-3-O-geranylgeranylglyceryl phosphate (GGGP). This reaction is the second ether-bond-formation step in the biosynthesis of archaeal membrane lipids. The protein is Digeranylgeranylglyceryl phosphate synthase of Metallosphaera sedula (strain ATCC 51363 / DSM 5348 / JCM 9185 / NBRC 15509 / TH2).